Consider the following 390-residue polypeptide: tRNA-specific 2-thiouridylase MnmA (390 aa).

Residues 20–27 (AMSGGVDS) and leucine 46 contribute to the ATP site. Catalysis depends on cysteine 114, which acts as the Nucleophile. Cysteine 114 and cysteine 211 are oxidised to a cystine. Glycine 138 is an ATP binding site. Positions 161 to 163 (RDQ) are interaction with tRNA. Cysteine 211 (cysteine persulfide intermediate) is an active-site residue.

Belongs to the MnmA/TRMU family.

The protein localises to the cytoplasm. The enzyme catalyses S-sulfanyl-L-cysteinyl-[protein] + uridine(34) in tRNA + AH2 + ATP = 2-thiouridine(34) in tRNA + L-cysteinyl-[protein] + A + AMP + diphosphate + H(+). In terms of biological role, catalyzes the 2-thiolation of uridine at the wobble position (U34) of tRNA, leading to the formation of s(2)U34. The polypeptide is tRNA-specific 2-thiouridylase MnmA (Azorhizobium caulinodans (strain ATCC 43989 / DSM 5975 / JCM 20966 / LMG 6465 / NBRC 14845 / NCIMB 13405 / ORS 571)).